The chain runs to 693 residues: Periplasmic alpha-galactoside-binding protein (693 aa).

A signal peptide spans 1–20 (MKTHRLNMTASLLIGISAFA).

The protein belongs to the bacterial solute-binding protein 5 family.

It localises to the periplasm. In terms of biological role, involved in the transport of alpha-galactosides. Required for the utilization of raffinose and melibiose. Probably acts as a periplasmic substrate-binding protein for a transport system. The polypeptide is Periplasmic alpha-galactoside-binding protein (Rhizobium meliloti (strain 1021) (Ensifer meliloti)).